An 88-amino-acid chain; its full sequence is Large ribosomal subunit protein eL31 (88 aa).

The protein belongs to the eukaryotic ribosomal protein eL31 family.

The protein is Large ribosomal subunit protein eL31 (rpl31e) of Archaeoglobus fulgidus (strain ATCC 49558 / DSM 4304 / JCM 9628 / NBRC 100126 / VC-16).